A 387-amino-acid chain; its full sequence is Proline-rich protein 5 (387 aa).

Interaction with RICTOR regions lie at residues methionine 10–glycine 96 and histidine 189–tyrosine 219. A disordered region spans residues serine 11 to threonine 33. Residues leucine 18–threonine 33 are compositionally biased toward basic and acidic residues. Position 253 is a phosphoserine (serine 253). 2 disordered regions span residues asparagine 262–leucine 347 and aspartate 365–valine 387. The segment covering serine 310–serine 321 has biased composition (low complexity). The residue at position 373 (serine 373) is a Phosphoserine.

This sequence belongs to the PROTOR family. As to quaternary structure, associated component of the mechanistic target of rapamycin complex 2 (mTORC2). Binds directly to MTOR and RICTOR within the TORC2 complex.

Associated subunit of mTORC2, which regulates cell growth and survival in response to hormonal signals. mTORC2 is activated by growth factors, but, in contrast to mTORC1, seems to be nutrient-insensitive. mTORC2 seems to function upstream of Rho GTPases to regulate the actin cytoskeleton, probably by activating one or more Rho-type guanine nucleotide exchange factors. PRR5 plays an important role in regulation of PDGFRB expression and in modulation of platelet-derived growth factor signaling. May act as a tumor suppressor in breast cancer. The polypeptide is Proline-rich protein 5 (Rattus norvegicus (Rat)).